The following is a 120-amino-acid chain: NAD(P)H-quinone oxidoreductase subunit 3 (120 aa).

Helical transmembrane passes span 6 to 26 (GYDA…LALV), 64 to 84 (MFAL…PWAV), and 89 to 109 (LGLL…VALA).

This sequence belongs to the complex I subunit 3 family. As to quaternary structure, NDH-1 can be composed of about 15 different subunits; different subcomplexes with different compositions have been identified which probably have different functions.

Its subcellular location is the cellular thylakoid membrane. It catalyses the reaction a plastoquinone + NADH + (n+1) H(+)(in) = a plastoquinol + NAD(+) + n H(+)(out). It carries out the reaction a plastoquinone + NADPH + (n+1) H(+)(in) = a plastoquinol + NADP(+) + n H(+)(out). In terms of biological role, NDH-1 shuttles electrons from an unknown electron donor, via FMN and iron-sulfur (Fe-S) centers, to quinones in the respiratory and/or the photosynthetic chain. The immediate electron acceptor for the enzyme in this species is believed to be plastoquinone. Couples the redox reaction to proton translocation, and thus conserves the redox energy in a proton gradient. Cyanobacterial NDH-1 also plays a role in inorganic carbon-concentration. The polypeptide is NAD(P)H-quinone oxidoreductase subunit 3 (Synechococcus sp. (strain CC9902)).